The following is a 608-amino-acid chain: Threonine--tRNA ligase (608 aa).

Residues 1-143 are editing domain; that stretch reads MRVLYIHAER…VFKPEEAKTE (143 aa). Catalytic regions lie at residues 194–490 and 195–490; these read PKYL…PRLP and KYLD…PRLP. Cysteine 287, histidine 338, and histidine 459 together coordinate Zn(2+).

This sequence belongs to the class-II aminoacyl-tRNA synthetase family. Homodimer. Requires Zn(2+) as cofactor.

The protein resides in the cytoplasm. It carries out the reaction tRNA(Thr) + L-threonine + ATP = L-threonyl-tRNA(Thr) + AMP + diphosphate + H(+). In terms of biological role, catalyzes the attachment of threonine to tRNA(Thr) in a two-step reaction: L-threonine is first activated by ATP to form Thr-AMP and then transferred to the acceptor end of tRNA(Thr). Also edits incorrectly charged L-seryl-tRNA(Thr). The protein is Threonine--tRNA ligase of Pyrobaculum arsenaticum (strain DSM 13514 / JCM 11321 / PZ6).